The primary structure comprises 60 residues: Metallothionein (60 aa).

Residues Met1–Lys28 form a beta region. A divalent metal cation contacts are provided by Cys3, Cys5, Cys11, Cys13, Cys17, Cys19, Cys22, Cys24, Cys27, Cys31, Cys32, Cys34, Cys35, Cys39, Cys42, Cys46, Cys48, Cys56, Cys58, and Cys59. The segment at Lys29 to Asn60 is alpha.

It belongs to the metallothionein superfamily. Type 1 family.

Functionally, metallothioneins have a high content of cysteine residues that bind various heavy metals. In Ambystoma mexicanum (Axolotl), this protein is Metallothionein (MT-A).